A 195-amino-acid polypeptide reads, in one-letter code: Adenylate kinase (195 aa).

Position 8-16 (8-16) interacts with ATP; the sequence is GIPGVGKTT.

This sequence belongs to the archaeal adenylate kinase family.

It is found in the cytoplasm. The enzyme catalyses AMP + ATP = 2 ADP. The sequence is that of Adenylate kinase from Saccharolobus islandicus (strain M.14.25 / Kamchatka #1) (Sulfolobus islandicus).